The primary structure comprises 1185 residues: Chromosome partition protein Smc (1185 aa).

ATP is bound at residue 32 to 39; that stretch reads PNGSGKSN. Positions 228 to 503 form a coiled coil; it reads SRLVKKLTIA…LQAVQERYTN (276 aa). The tract at residues 300 to 323 is disordered; sequence TQGQQGVDAERRQNQQSEQERLTA. The segment covering 307 to 320 has biased composition (basic and acidic residues); the sequence is DAERRQNQQSEQER. Residues 519-637 form the SMC hinge domain; sequence SGVAGAVSEL…VDTLDHAMAI (119 aa). Coiled coils occupy residues 675–928 and 989–1025; these read QQQQ…RRLE and AIDEFERVKERFDFLNNQASDLTEAKEHLLQTMADLD.

It belongs to the SMC family. Homodimer.

The protein resides in the cytoplasm. Functionally, required for chromosome condensation and partitioning. The polypeptide is Chromosome partition protein Smc (Lactiplantibacillus plantarum (strain ATCC BAA-793 / NCIMB 8826 / WCFS1) (Lactobacillus plantarum)).